Here is a 245-residue protein sequence, read N- to C-terminus: Uridylate kinase (245 aa).

20–23 is an ATP binding site; the sequence is KLSG. Position 60 (G60) interacts with UMP. Positions 61 and 65 each coordinate ATP. Residues D80 and 141 to 148 contribute to the UMP site; that span reads AGLPYFST. ATP is bound by residues Y175 and D178.

Belongs to the UMP kinase family. Homohexamer.

The protein localises to the cytoplasm. The enzyme catalyses UMP + ATP = UDP + ADP. It functions in the pathway pyrimidine metabolism; CTP biosynthesis via de novo pathway; UDP from UMP (UMPK route): step 1/1. Its activity is regulated as follows. Inhibited by UTP. Catalyzes the reversible phosphorylation of UMP to UDP. This is Uridylate kinase from Arthrobacter sp. (strain FB24).